The sequence spans 237 residues: Leucyl/phenylalanyl-tRNA--protein transferase (237 aa).

This sequence belongs to the L/F-transferase family.

The protein localises to the cytoplasm. The enzyme catalyses N-terminal L-lysyl-[protein] + L-leucyl-tRNA(Leu) = N-terminal L-leucyl-L-lysyl-[protein] + tRNA(Leu) + H(+). It catalyses the reaction N-terminal L-arginyl-[protein] + L-leucyl-tRNA(Leu) = N-terminal L-leucyl-L-arginyl-[protein] + tRNA(Leu) + H(+). It carries out the reaction L-phenylalanyl-tRNA(Phe) + an N-terminal L-alpha-aminoacyl-[protein] = an N-terminal L-phenylalanyl-L-alpha-aminoacyl-[protein] + tRNA(Phe). In terms of biological role, functions in the N-end rule pathway of protein degradation where it conjugates Leu, Phe and, less efficiently, Met from aminoacyl-tRNAs to the N-termini of proteins containing an N-terminal arginine or lysine. This Shewanella baltica (strain OS195) protein is Leucyl/phenylalanyl-tRNA--protein transferase.